The following is a 150-amino-acid chain: Helix-loop-helix protein hlh-12 (150 aa).

Residues M1 to Q24 form a disordered region. Positions N11 to Q24 are enriched in basic and acidic residues. The tract at residues D13 to V26 is basic motif. Residues D13–L65 form the bHLH domain. Residues S27–L65 form a helix-loop-helix motif region.

Forms a heterodimer with helix-loop-helix protein hlh-2.

The protein resides in the nucleus. In terms of biological role, transcription factor which binds the E box motif 5'-GCAGGTG-3'. Involved in migration of the gonadal leader cells; distal tip cells (DTCs) in hermaphrodites, and linker cells in males. Positively regulates expression of alpha integrin ina-1 and ADAMTS protease gon-1. This Caenorhabditis elegans protein is Helix-loop-helix protein hlh-12.